A 144-amino-acid chain; its full sequence is Large ribosomal subunit protein uL15 (144 aa).

Positions Met1 to Gly53 are disordered. The segment covering Arg21 to Gly31 has biased composition (gly residues).

It belongs to the universal ribosomal protein uL15 family. As to quaternary structure, part of the 50S ribosomal subunit.

In terms of biological role, binds to the 23S rRNA. The polypeptide is Large ribosomal subunit protein uL15 (Proteus mirabilis (strain HI4320)).